Consider the following 718-residue polypeptide: Protein spire homolog 2 (718 aa).

Disordered stretches follow at residues 1–22 (MARAGGGGAAAPERAGGAARPE) and 143–166 (DSSCGAADEGYVGPEEEEEAEGGP). Residues 10–21 (AAPERAGGAARP) are compositionally biased toward low complexity. A KIND domain is found at 26–207 (LSLEEVLKVY…RALFVETLEL (182 aa)). WH2 domains are found at residues 251-265 (QLMRELRHGVKLKKV), 281-299 (PFEMLMQDIRARNYKLRKV), and 345-362 (LHEKILEEIKQERRLRPV). Ser374 carries the phosphoserine modification. A disordered region spans residues 397-434 (TDTGSGSQRPRPRVLLKAPTLAEMEEMNTSEEEESPCG). The segment covering 419 to 432 (EMEEMNTSEEEESP) has biased composition (acidic residues). 3 positions are modified to phosphoserine: Ser443, Ser445, and Ser479. A disordered region spans residues 456–518 (MASGLQSAAQ…SSLSSVDGPE (63 aa)). Positions 496–513 (SGQSQPLPSSALPSSLSS) are enriched in low complexity. The tract at residues 538 to 558 (LALTVEEVVDVRRVLVKAEME) is spir-box.

The protein belongs to the spire family. In terms of tissue distribution, detected in oocytes.

The protein resides in the cytoplasm. It is found in the cytoskeleton. Its subcellular location is the cytosol. The protein localises to the cell membrane. It localises to the cytoplasmic vesicle membrane. Functionally, acts as an actin nucleation factor, remains associated with the slow-growing pointed end of the new filament. Involved in intracellular vesicle transport along actin fibers, providing a novel link between actin cytoskeleton dynamics and intracellular transport. Required for asymmetric spindle positioning and asymmetric cell division during oocyte meiosis. Required for normal formation of the cleavage furrow and for polar body extrusion during female germ cell meiosis. Also acts in the nucleus: together with SPIRE1 and SPIRE2, promotes assembly of nuclear actin filaments in response to DNA damage in order to facilitate movement of chromatin and repair factors after DNA damage. The protein is Protein spire homolog 2 (Spire2) of Mus musculus (Mouse).